Consider the following 351-residue polypeptide: uncharacterized protein (351 aa).

Residues aspartate 215, aspartate 226, histidine 290, glutamate 319, and glutamate 333 each contribute to the Mn(2+) site.

The protein belongs to the peptidase M24B family. Mn(2+) is required as a cofactor.

This is an uncharacterized protein from Staphylococcus epidermidis (strain ATCC 35984 / DSM 28319 / BCRC 17069 / CCUG 31568 / BM 3577 / RP62A).